Consider the following 1376-residue polypeptide: DNA-directed RNA polymerase subunit beta'' (1376 aa).

4 residues coordinate Zn(2+): cysteine 221, cysteine 290, cysteine 297, and cysteine 300. The segment at 895-919 (PSGSGFPSDNELDHSNRNPFSSSYP) is disordered.

It belongs to the RNA polymerase beta' chain family. RpoC2 subfamily. In plastids the minimal PEP RNA polymerase catalytic core is composed of four subunits: alpha, beta, beta', and beta''. When a (nuclear-encoded) sigma factor is associated with the core the holoenzyme is formed, which can initiate transcription. Zn(2+) serves as cofactor.

The protein localises to the plastid. It localises to the chloroplast. The catalysed reaction is RNA(n) + a ribonucleoside 5'-triphosphate = RNA(n+1) + diphosphate. Functionally, DNA-dependent RNA polymerase catalyzes the transcription of DNA into RNA using the four ribonucleoside triphosphates as substrates. This chain is DNA-directed RNA polymerase subunit beta'', found in Pelargonium hortorum (Common geranium).